We begin with the raw amino-acid sequence, 265 residues long: Shikimate dehydrogenase (NADP(+)) (265 aa).

Shikimate contacts are provided by residues 15–17 (SLS) and T62. Catalysis depends on K66, which acts as the Proton acceptor. Residues N87 and D102 each coordinate shikimate. NADP(+)-binding positions include 125–129 (GAGGA), 149–154 (NRTLEK), and L209. A shikimate-binding site is contributed by Y211. G233 lines the NADP(+) pocket.

Belongs to the shikimate dehydrogenase family. Homodimer.

The enzyme catalyses shikimate + NADP(+) = 3-dehydroshikimate + NADPH + H(+). It functions in the pathway metabolic intermediate biosynthesis; chorismate biosynthesis; chorismate from D-erythrose 4-phosphate and phosphoenolpyruvate: step 4/7. Its function is as follows. Involved in the biosynthesis of the chorismate, which leads to the biosynthesis of aromatic amino acids. Catalyzes the reversible NADPH linked reduction of 3-dehydroshikimate (DHSA) to yield shikimate (SA). This is Shikimate dehydrogenase (NADP(+)) from Legionella pneumophila subsp. pneumophila (strain Philadelphia 1 / ATCC 33152 / DSM 7513).